A 373-amino-acid polypeptide reads, in one-letter code: Forkhead box protein E1 (373 aa).

Residues 19–51 form a disordered region; the sequence is KEERGETAAGAGVPGEATGRGAGGRRRKRPLQR. Residues 41–50 show a composition bias toward basic residues; it reads GGRRRKRPLQ. The fork-head DNA-binding region spans 53 to 147; it reads KPPYSYIALI…ESGSFLRRRK (95 aa).

Post-translationally, phosphorylated. Detected in adult brain, placenta, lung, liver, skeletal muscle, kidney, pancreas, heart, colon, small intestine testis and thymus. Expression was strongest in heart and pancreas.

Its subcellular location is the nucleus. Transcription factor that binds consensus sites on a variety of gene promoters and activate their transcription. Involved in proper palate formation, most probably through the expression of MSX1 and TGFB3 genes which are direct targets of this transcription factor. Also implicated in thyroid gland morphogenesis. May indirectly play a role in cell growth and migration through the regulation of WNT5A expression. This chain is Forkhead box protein E1 (FOXE1), found in Homo sapiens (Human).